Reading from the N-terminus, the 263-residue chain is N-acetylgalactosamine permease IID component (263 aa).

The region spanning 3–263 (SEISKKDITR…SIVCSAFGIL (261 aa)) is the PTS EIID domain. 6 consecutive transmembrane segments (helical) span residues 61–81 (LEFI…LISM), 98–118 (LFGP…LPIM), 131–151 (LLGP…RVGW), 178–198 (TILG…INVV), 215–235 (FFDK…MYYF), and 243–263 (PVLL…FGIL).

It localises to the cell inner membrane. Functionally, the phosphoenolpyruvate-dependent sugar phosphotransferase system (PTS), a major carbohydrate active -transport system, catalyzes the phosphorylation of incoming sugar substrates concomitant with their translocation across the cell membrane. This system is involved in N-acetylgalactosamine transport. The polypeptide is N-acetylgalactosamine permease IID component (agaD) (Escherichia coli (strain K12)).